The sequence spans 105 residues: Large ribosomal subunit protein uL24 (105 aa).

Belongs to the universal ribosomal protein uL24 family. Part of the 50S ribosomal subunit.

Functionally, one of two assembly initiator proteins, it binds directly to the 5'-end of the 23S rRNA, where it nucleates assembly of the 50S subunit. One of the proteins that surrounds the polypeptide exit tunnel on the outside of the subunit. This chain is Large ribosomal subunit protein uL24, found in Aeromonas hydrophila subsp. hydrophila (strain ATCC 7966 / DSM 30187 / BCRC 13018 / CCUG 14551 / JCM 1027 / KCTC 2358 / NCIMB 9240 / NCTC 8049).